Consider the following 464-residue polypeptide: ATP synthase subunit beta 2 (464 aa).

153–160 (GGAGVGKT) is a binding site for ATP.

It belongs to the ATPase alpha/beta chains family. In terms of assembly, F-type ATPases have 2 components, CF(1) - the catalytic core - and CF(0) - the membrane proton channel. CF(1) has five subunits: alpha(3), beta(3), gamma(1), delta(1), epsilon(1). CF(0) has three main subunits: a(1), b(2) and c(9-12). The alpha and beta chains form an alternating ring which encloses part of the gamma chain. CF(1) is attached to CF(0) by a central stalk formed by the gamma and epsilon chains, while a peripheral stalk is formed by the delta and b chains.

The protein resides in the cell inner membrane. The enzyme catalyses ATP + H2O + 4 H(+)(in) = ADP + phosphate + 5 H(+)(out). Produces ATP from ADP in the presence of a proton gradient across the membrane. The catalytic sites are hosted primarily by the beta subunits. The sequence is that of ATP synthase subunit beta 2 from Paraburkholderia xenovorans (strain LB400).